We begin with the raw amino-acid sequence, 377 residues long: Protein RecA (377 aa).

Residue 76–83 (GPESSGKT) coordinates ATP.

The protein belongs to the RecA family.

The protein resides in the cytoplasm. Can catalyze the hydrolysis of ATP in the presence of single-stranded DNA, the ATP-dependent uptake of single-stranded DNA by duplex DNA, and the ATP-dependent hybridization of homologous single-stranded DNAs. It interacts with LexA causing its activation and leading to its autocatalytic cleavage. The polypeptide is Protein RecA (Corynebacterium aurimucosum (strain ATCC 700975 / DSM 44827 / CIP 107346 / CN-1) (Corynebacterium nigricans)).